The following is a 141-amino-acid chain: Hemoglobin subunit alpha (141 aa).

One can recognise a Globin domain in the interval 1–141 (VLSPADKTNI…VSTVLTSKYR (141 aa)). At S3 the chain carries Phosphoserine. K7 bears the N6-succinyllysine mark. The residue at position 8 (T8) is a Phosphothreonine. Position 11 is an N6-succinyllysine (K11). N6-acetyllysine; alternate is present on K16. Position 16 is an N6-succinyllysine; alternate (K16). Phosphotyrosine is present on Y24. S35 carries the post-translational modification Phosphoserine. K40 carries the N6-succinyllysine modification. At S49 the chain carries Phosphoserine. An O2-binding site is contributed by H58. A heme b-binding site is contributed by H87. Phosphoserine is present on S102. Residue T108 is modified to Phosphothreonine. Phosphoserine is present on S124. Residues T134 and T137 each carry the phosphothreonine modification. At S138 the chain carries Phosphoserine.

Belongs to the globin family. Heterotetramer of two alpha chains and two beta chains. Red blood cells.

In terms of biological role, involved in oxygen transport from the lung to the various peripheral tissues. Its function is as follows. Hemopressin acts as an antagonist peptide of the cannabinoid receptor CNR1. Hemopressin-binding efficiently blocks cannabinoid receptor CNR1 and subsequent signaling. This is Hemoglobin subunit alpha (HBA) from Canis lupus familiaris (Dog).